The chain runs to 691 residues: MAPFPEEVDVFTAPHWRMKQLVGLYCDKLSKTNFSNNNDFRALLQSLYATFKEFKMHEQIENEYIIGLLQQRSQTIYNVHSDNKLSEMLSLFEKGLKNVKNEYEQLNYAKQLKERLEAFTKDFLPHMKEEEEVFQPMLMEYFTYEELKDIKKKVIAQHCSQKDTAELLRGLSLWNQAEERQKFFKYSVDEKSDKEAEVSEQSTGITHLPPEVMVSIFSYLNPQELCRCSQVSTKWSQLAKTGSLWKHLYPVHWARGDWYSGPAAELDTEPDEEWVKSRRDESRAFQEWDEDADIDESEESGEESIAISIAQMEKRLLHGLIHNVLPYVGTSVKTLVLAYSSAVSSKMVRQILELCPNLEHLDLTQTDISDSAFDSWSWLGCCQSLRHLDLSGCEKITDVALEKISRALGILTTHESGLLKTSTSKVTSTTWKNKDITMQSFKQSACLHDVTNKDIGEEVDNEHPWTKPISSDDFTSPYVWMLDAEDLADIEDAVEWRHRNVESLCVMETASNFSCPSSACYSKDIVGLRTSVCWQQHCASPAFAYCGHSYCCTGTALRTMSALPESSALCRKAPRTRLLREKDLIYSGSEKSDQETGRVLLFLSLSGCYQITDHGLRVLTLGGGLPYLEHLNLSGCLTVTGAGLQDLVSACPSLNDEYFYYCDNINGPHADTASGCQNLQCGFRACCRSGE.

A hemerythrin-like region spans residues 1 to 159 (MAPFPEEVDV…IKKKVIAQHC (159 aa)). Residues His15, His57, Glu58, Glu61, His80, His126, and Glu130 each coordinate Fe(3+). An F-box domain is found at 202 to 248 (STGITHLPPEVMVSIFSYLNPQELCRCSQVSTKWSQLAKTGSLWKHL). LRR repeat units lie at residues 340-364 (SSAVSSKMVRQILELCPNLEHLDLT), 365-392 (QTDISDSAFDSWSWLGCCQSLRHLDLSG), 393-418 (CEKITDVALEKISRALGILTTHESGL), 479-508 (VWMLDAEDLADIEDAVEWRHRNVESLCVME), 576-607 (TRLLREKDLIYSGSEKSDQETGRVLLFLSLSG), 608-635 (CYQITDHGLRVLTLGGGLPYLEHLNLSG), and 636-661 (CLTVTGAGLQDLVSACPSLNDEYFYY). Cys662, Cys676, Cys686, and Cys687 together coordinate [2Fe-2S] cluster.

Part of a SCF (SKP1-cullin-F-box) protein ligase complex. Interacts with ACO1/IRP1, IREB2/IRP2; the interaction depends on the [2Fe-2S] cluster. Interacts with DCTN1/p150-glued. [2Fe-2S] cluster is required as a cofactor. Post-translationally, polybiquitinated upon iron and oxygen depletion, leading to its degradation by the proteasome. Ubiquitination is regulated by the hemerythrin-like region that acts as an oxygen and iron sensor. Undergoes constitutive ubiquitin-dependent degradation at the steady state by HERC2.

The protein localises to the cytoplasm. It localises to the perinuclear region. The protein resides in the nucleus. Its pathway is protein modification; protein ubiquitination. An iron-sulfur cluster promotes IRP2 polyubiquitination and degradation in response to both iron and oxygen concentrations. In terms of biological role, component of some SCF (SKP1-cullin-F-box) protein ligase complex that plays a central role in iron homeostasis by promoting the ubiquitination and subsequent degradation of IREB2/IRP2. The C-terminal domain of FBXL5 contains a redox-sensitive [2Fe-2S] cluster that, upon oxidation, promotes binding to IRP2 to effect its oxygen-dependent degradation. Under iron deficiency conditions, the N-terminal hemerythrin-like (Hr) region, which contains a diiron metal center, cannot bind iron and undergoes conformational changes that destabilize the FBXL5 protein and cause its ubiquitination and degradation. When intracellular iron levels start rising, the Hr region is stabilized. Additional increases in iron levels facilitate the assembly and incorporation of a redox active [2Fe-2S] cluster in the C-terminal domain. Only when oxygen level is high enough to maintain the cluster in its oxidized state can FBXL5 recruit IRP2 as a substrate for polyubiquination and degradation. Promotes ubiquitination and subsequent degradation of the dynactin complex component DCTN1. Within the nucleus, promotes the ubiquitination of SNAI1; preventing its interaction with DNA and promoting its degradation. Negatively regulates DNA damage response by mediating the ubiquitin-proteasome degradation of the DNA repair protein NABP2. The chain is F-box/LRR-repeat protein 5 (FBXL5) from Bos taurus (Bovine).